Consider the following 408-residue polypeptide: MKVLVINAGSSSLKYQLIDMTNESALAIGLCERIGIDNSIITQKRFDGKKLEKQTDLPNHKIALEEVVKALTDSEFGVIKSMDEINAVGHRVVHGGEKFNSSALINEGVEQAIKDCFELAPLHNPPNMMGISSCQEIMPGVPMVAVFDTAFHHTIPPYAYMYALPYELYEKYGIRKYGFHGTSHFYVAKRAAAMLGKPEQDVKVITCHLGNGSSITAVKGGKSIETTMGFTPLEGVAMGTRCGSIDPAVVPFIMEKEGLSTREIDTLMNKKSGVLGVSSLSNDFRDLDEAASKGNQKAELALEIFAYKIKKVIGEYIAVLNGVDAIVFTAGIGENSASIRKRILADLDGIGIKIDEEKNKIRGQEIDISTPDATVRVLVIPTNEELTIARDTKEICETEVKLRSSVPI.

Asn7 is a binding site for Mg(2+). Position 14 (Lys14) interacts with ATP. Position 91 (Arg91) interacts with substrate. The active-site Proton donor/acceptor is the Asp148. ATP-binding positions include 208–212 (HLGNG), 283–285 (DFR), and 331–335 (GIGEN). Glu384 is a binding site for Mg(2+).

It belongs to the acetokinase family. Homodimer. The cofactor is Mg(2+). Mn(2+) serves as cofactor.

Its subcellular location is the cytoplasm. The catalysed reaction is acetate + ATP = acetyl phosphate + ADP. It functions in the pathway metabolic intermediate biosynthesis; acetyl-CoA biosynthesis; acetyl-CoA from acetate: step 1/2. In terms of biological role, catalyzes the formation of acetyl phosphate from acetate and ATP. Can also catalyze the reverse reaction. The chain is Acetate kinase from Methanosarcina mazei (strain ATCC BAA-159 / DSM 3647 / Goe1 / Go1 / JCM 11833 / OCM 88) (Methanosarcina frisia).